Reading from the N-terminus, the 1606-residue chain is Phosphatidylinositol 3,4,5-trisphosphate-dependent Rac exchanger 2 protein (1606 aa).

A DH domain is found at 23–214 (LRVCVLSELQ…KAVCSNINEA (192 aa)). A PH domain is found at 245 to 361 (EMLMCGVLLK…WFEAILKERE (117 aa)). DEP domains lie at 390 to 464 (CRQG…RFRY) and 491 to 566 (SLFT…FFSD). PDZ domains lie at 592–671 (KSLL…VLVS) and 677–754 (TVKI…QDSI). Residues 1581–1606 (GVRDRTPQSAPRLYKLCEPPPPAGEE) are disordered.

In terms of assembly, interacts with RAC1. In terms of tissue distribution, isoform 1 is highly expressed in skeletal muscle, heart and placenta, absent from peripheral blood leukocytes. Isoform 2 is expressed in skeletal muscle, kidney, small intestine, and placenta. Isoform 3 is expressed in the heart.

Its function is as follows. Functions as a RAC1 guanine nucleotide exchange factor (GEF), activating Rac proteins by exchanging bound GDP for free GTP. Its activity is synergistically activated by phosphatidylinositol 3,4,5-trisphosphate and the beta gamma subunits of heterotrimeric G protein. Mediates the activation of RAC1 in a PI3K-dependent manner. May be an important mediator of Rac signaling, acting directly downstream of both G protein-coupled receptors and phosphoinositide 3-kinase. The protein is Phosphatidylinositol 3,4,5-trisphosphate-dependent Rac exchanger 2 protein of Homo sapiens (Human).